A 486-amino-acid polypeptide reads, in one-letter code: Cardiolipin synthase A (486 aa).

The next 2 membrane-spanning stretches (helical) occupy residues 3–23 (IFYD…IANI) and 38–58 (MSWL…WFFF). PLD phosphodiesterase domains follow at residues 219–246 (LDVR…VDPY) and 399–426 (KKGL…DMRS). Residues His224, Lys226, Asp231, His404, Lys406, and Asp411 contribute to the active site.

This sequence belongs to the phospholipase D family. Cardiolipin synthase subfamily. ClsA sub-subfamily.

The protein localises to the cell inner membrane. The enzyme catalyses 2 a 1,2-diacyl-sn-glycero-3-phospho-(1'-sn-glycerol) = a cardiolipin + glycerol. Catalyzes the reversible phosphatidyl group transfer from one phosphatidylglycerol molecule to another to form cardiolipin (CL) (diphosphatidylglycerol) and glycerol. This is Cardiolipin synthase A from Buchnera aphidicola subsp. Schizaphis graminum (strain Sg).